A 170-amino-acid chain; its full sequence is APRG1 tumor suppressor candidate (170 aa).

Residues 150–170 (IALALAGPGAILILELSWFLG) traverse the membrane as a helical segment.

In terms of tissue distribution, expressed at high levels in the pancreas and placenta. As to expression, expressed at high levels in the kidney.

The protein resides in the membrane. In Homo sapiens (Human), this protein is APRG1 tumor suppressor candidate.